A 388-amino-acid polypeptide reads, in one-letter code: Chaperone protein DnaJ (388 aa).

One can recognise a J domain in the interval 4–69; sequence DYYDILGVDE…EKRQRYDQFG (66 aa). Basic and acidic residues-rich tracts occupy residues 27–50, 58–73, and 113–124; these read KAME…KEAS, DPEK…HDGV, and GRSERGRGRPGS. Disordered stretches follow at residues 27–86 and 99–125; these read KAME…GRGR and SDIF…PGSD. The CR-type zinc finger occupies 140-225; the sequence is GTEKNLRLQK…CGGEGRVQGE (86 aa). Zn(2+) is bound by residues cysteine 153, cysteine 156, cysteine 173, cysteine 176, cysteine 199, cysteine 202, cysteine 213, and cysteine 216. CXXCXGXG motif repeat units follow at residues 153-160, 173-180, 199-206, and 213-220; these read CESCDGTG, CPKCDGTG, CPRCEGEG, and CDDCGGEG. Over residues 362–376 the composition is skewed to basic and acidic residues; it reads AHDNFQPRPPEEDTQ. A disordered region spans residues 362-388; the sequence is AHDNFQPRPPEEDTQKSFFRRVSDVFS.

It belongs to the DnaJ family. As to quaternary structure, homodimer. Zn(2+) serves as cofactor.

It is found in the cytoplasm. In terms of biological role, participates actively in the response to hyperosmotic and heat shock by preventing the aggregation of stress-denatured proteins and by disaggregating proteins, also in an autonomous, DnaK-independent fashion. Unfolded proteins bind initially to DnaJ; upon interaction with the DnaJ-bound protein, DnaK hydrolyzes its bound ATP, resulting in the formation of a stable complex. GrpE releases ADP from DnaK; ATP binding to DnaK triggers the release of the substrate protein, thus completing the reaction cycle. Several rounds of ATP-dependent interactions between DnaJ, DnaK and GrpE are required for fully efficient folding. Also involved, together with DnaK and GrpE, in the DNA replication of plasmids through activation of initiation proteins. This is Chaperone protein DnaJ from Salinibacter ruber (strain DSM 13855 / M31).